The primary structure comprises 529 residues: Inosine-5'-monophosphate dehydrogenase (529 aa).

CBS domains lie at 129-185 (MVTD…SKQV) and 189-246 (MTKT…PLAT). NAD(+) is bound by residues aspartate 283 and 334-336 (GVG). The K(+) site is built by glycine 336 and glycine 338. Residue serine 339 coordinates IMP. A K(+)-binding site is contributed by cysteine 341. The active-site Thioimidate intermediate is the cysteine 341. Residues 374–376 (DGG), 397–398 (GS), and 421–425 (YRGMG) contribute to the IMP site. Residue arginine 443 is the Proton acceptor of the active site. Glutamate 458 serves as a coordination point for IMP. Residues glutamate 511, serine 512, and histidine 513 each coordinate K(+).

The protein belongs to the IMPDH/GMPR family. As to quaternary structure, homotetramer. The cofactor is K(+).

The catalysed reaction is IMP + NAD(+) + H2O = XMP + NADH + H(+). It functions in the pathway purine metabolism; XMP biosynthesis via de novo pathway; XMP from IMP: step 1/1. Mycophenolic acid (MPA) is a non-competitive inhibitor that prevents formation of the closed enzyme conformation by binding to the same site as the amobile flap. In contrast, mizoribine monophosphate (MZP) is a competitive inhibitor that induces the closed conformation. MPA is a potent inhibitor of mammalian IMPDHs but a poor inhibitor of the bacterial enzymes. MZP is a more potent inhibitor of bacterial IMPDH. Catalyzes the conversion of inosine 5'-phosphate (IMP) to xanthosine 5'-phosphate (XMP), the first committed and rate-limiting step in the de novo synthesis of guanine nucleotides, and therefore plays an important role in the regulation of cell growth. The sequence is that of Inosine-5'-monophosphate dehydrogenase from Mycobacterium leprae (strain TN).